A 461-amino-acid polypeptide reads, in one-letter code: Chromosomal replication initiator protein DnaA (461 aa).

The segment at 1 to 84 (MAVSLWQQCI…RFDIGSRPSA (84 aa)) is domain I, interacts with DnaA modulators. Residues 84 to 124 (AKKFEPAPVATVRAPNTQTKATVGTYFNTQAEPIANANHRS) form a domain II region. The domain III, AAA+ region stretch occupies residues 125-341 (NINPTYQFDN…GALNRVIANA (217 aa)). Residues Gly-169, Gly-171, Lys-172, and Thr-173 each contribute to the ATP site. The interval 342–461 (NFTGRPITID…YANLIRTLSS (120 aa)) is domain IV, binds dsDNA.

Belongs to the DnaA family. Oligomerizes as a right-handed, spiral filament on DNA at oriC.

The protein resides in the cytoplasm. In terms of biological role, plays an essential role in the initiation and regulation of chromosomal replication. ATP-DnaA binds to the origin of replication (oriC) to initiate formation of the DNA replication initiation complex once per cell cycle. Binds the DnaA box (a 9 base pair repeat at the origin) and separates the double-stranded (ds)DNA. Forms a right-handed helical filament on oriC DNA; dsDNA binds to the exterior of the filament while single-stranded (ss)DNA is stabiized in the filament's interior. The ATP-DnaA-oriC complex binds and stabilizes one strand of the AT-rich DNA unwinding element (DUE), permitting loading of DNA polymerase. After initiation quickly degrades to an ADP-DnaA complex that is not apt for DNA replication. Binds acidic phospholipids. This Shewanella putrefaciens (strain CN-32 / ATCC BAA-453) protein is Chromosomal replication initiator protein DnaA.